Reading from the N-terminus, the 838-residue chain is Glycogen phosphorylase, brain form (838 aa).

A2 carries the post-translational modification N-acetylalanine. Position 15 is a phosphoserine (S15). The AMP site is built by D43, Y197, and R310. A Phosphotyrosine modification is found at Y197. The residue at position 473 (Y473) is a Phosphotyrosine. S524 bears the Phosphoserine mark. K569 serves as a coordination point for pyridoxal 5'-phosphate. The interval 677 to 678 (TG) is pyridoxal 5'-phosphate. K681 bears the N6-(pyridoxal phosphate)lysine mark.

This sequence belongs to the glycogen phosphorylase family. In terms of assembly, homodimer. Dimers associate into a tetramer to form the enzymatically active phosphorylase A. The cofactor is pyridoxal 5'-phosphate. Phosphorylation of Ser-15 converts phosphorylase B (unphosphorylated) to phosphorylase A.

It catalyses the reaction [(1-&gt;4)-alpha-D-glucosyl](n) + phosphate = [(1-&gt;4)-alpha-D-glucosyl](n-1) + alpha-D-glucose 1-phosphate. With respect to regulation, activity of phosphorylase is controlled both by allosteric means (through the non-covalent binding of metabolites) and by covalent modification. Thus AMP allosterically activates, whereas ATP, ADP, and glucose-6-phosphate allosterically inhibit, phosphorylase B. Its function is as follows. Glycogen phosphorylase that regulates glycogen mobilization. Phosphorylase is an important allosteric enzyme in carbohydrate metabolism. Enzymes from different sources differ in their regulatory mechanisms and in their natural substrates. However, all known phosphorylases share catalytic and structural properties. This Rattus norvegicus (Rat) protein is Glycogen phosphorylase, brain form (Pygb).